The sequence spans 336 residues: Fructose-1,6-bisphosphatase class 1 (336 aa).

4 residues coordinate Mg(2+): Glu-90, Asp-112, Leu-114, and Asp-115. Substrate contacts are provided by residues Asp-115–Ser-118, Asn-211, and Lys-277. A Mg(2+)-binding site is contributed by Glu-283.

It belongs to the FBPase class 1 family. Homotetramer. Requires Mg(2+) as cofactor.

It is found in the cytoplasm. It catalyses the reaction beta-D-fructose 1,6-bisphosphate + H2O = beta-D-fructose 6-phosphate + phosphate. It functions in the pathway carbohydrate biosynthesis; gluconeogenesis. This chain is Fructose-1,6-bisphosphatase class 1, found in Pseudomonas putida (strain GB-1).